Here is a 200-residue protein sequence, read N- to C-terminus: ATP-dependent Clp protease proteolytic subunit (200 aa).

Ser105 acts as the Nucleophile in catalysis. His130 is an active-site residue.

This sequence belongs to the peptidase S14 family. Fourteen ClpP subunits assemble into 2 heptameric rings which stack back to back to give a disk-like structure with a central cavity, resembling the structure of eukaryotic proteasomes.

The protein resides in the cytoplasm. The catalysed reaction is Hydrolysis of proteins to small peptides in the presence of ATP and magnesium. alpha-casein is the usual test substrate. In the absence of ATP, only oligopeptides shorter than five residues are hydrolyzed (such as succinyl-Leu-Tyr-|-NHMec, and Leu-Tyr-Leu-|-Tyr-Trp, in which cleavage of the -Tyr-|-Leu- and -Tyr-|-Trp bonds also occurs).. Cleaves peptides in various proteins in a process that requires ATP hydrolysis. Has a chymotrypsin-like activity. Plays a major role in the degradation of misfolded proteins. This is ATP-dependent Clp protease proteolytic subunit from Hydrogenovibrio crunogenus (strain DSM 25203 / XCL-2) (Thiomicrospira crunogena).